The chain runs to 757 residues: MDVNPTLLFLKVPAQNAISTTFPYTGDPPYSHGTGTGYTMDTVNRTHQYSEKGKWTTNTETGAPQLNPIDGPLPEDNEPSGYAQTDCVLEAMAFLEESHPGIFENSCLETMEVVQQTRVDRLTQGRQTYDWTLNRNQPAATALANTIEVFRSNGLTANESGRLIDFLKDVMESMDKEEMEITTHFQRKRRVRDNMTKKMVTQRTIGKKKQRVNKRSYLIRALTLNTMTKDAERGKLKRRAIATPGMQIRGFVYFVETLARSICEKLEQSGLPVGGNEKKAKLANVVRKMMTNSQDTELSFTITGDNTKWNENQNPRMFLAMITYITKNQPEWFRNVLSIAPIMFSNKMARLGKGYMFESKSMKLRTQIPAEMLASIDLKYFNESTRKKIEKIRPLLIDGTASLSPGMMMGMFNMLSTVLGVSILNLGQKRYTKTTYWWDGLQSSDDFALIVNAPNHEGIQAGVDRFYRTCKLVGINMSKKKSYINRTGTFEFTSFFYRYGFVANFSMELPSFGVSGINESADMSIGVTVIKNNMINNDLGPATAQMALQLFIKDYRYTYRCHRGDTQIQTRRSFELKKLWEQTRSKAGLLVSDGGPNLYNIRNLHIPEVCLKWELMDEDYQGRLCNPLNPFVSHKEIESVNNAVVMPAHGPAKSMEYDAVATTHSWIPKRNRSILNTSQRGILEDEQMYQKCCNLFEKFFPSSSYRRPVGISSMVEAMVSRARIDARIDFESGRIKKEEFAEIMKTCSTIEELRRQK.

The tract at residues 50–82 (SEKGKWTTNTETGAPQLNPIDGPLPEDNEPSGY) is disordered. Polar residues predominate over residues 55–64 (WTTNTETGAP). 2 consecutive short sequence motifs (nuclear localization signal) follow at residues 187–195 (RKRRVRDNM) and 203–216 (RTIG…NKRS). The tract at residues 249–256 (RGFVYFVE) is promoter-binding site. The 198-residue stretch at 286–483 (VRKMMTNSQD…GINMSKKKSY (198 aa)) folds into the RdRp catalytic domain.

This sequence belongs to the influenza viruses polymerase PB1 family. Influenza RNA polymerase is composed of three subunits: PB1, PB2 and PA. Interacts (via N-terminus) with PA (via C-terminus). Interacts (via C-terminus) with PB2 (via N-terminus); this interaction is essential for transcription initiation. Post-translationally, phosphorylated by host PRKCA.

The protein localises to the host nucleus. The protein resides in the host cytoplasm. It carries out the reaction RNA(n) + a ribonucleoside 5'-triphosphate = RNA(n+1) + diphosphate. Functionally, RNA-dependent RNA polymerase which is responsible for replication and transcription of virus RNA segments. The transcription of viral mRNAs occurs by a unique mechanism called cap-snatching. 5' methylated caps of cellular mRNAs are cleaved after 10-13 nucleotides by PA. In turn, these short capped RNAs are used as primers by PB1 for transcription of viral mRNAs. During virus replication, PB1 initiates RNA synthesis and copy vRNA into complementary RNA (cRNA) which in turn serves as a template for the production of more vRNAs. The chain is RNA-directed RNA polymerase catalytic subunit from Aves (whales).